The primary structure comprises 453 residues: Dihydrolipoyllysine-residue succinyltransferase component of 2-oxoglutarate dehydrogenase complex, mitochondrial (453 aa).

The transit peptide at 1–67 directs the protein to the mitochondrion; sequence MLSRSRCVSR…RFFRTTAVCK (67 aa). Residues 70-144 enclose the Lipoyl-binding domain; it reads LVTVKTPAFA…EGGTPLFTLR (75 aa). Position 81 is a phosphoserine (Ser81). The residue at position 110 (Lys110) is an N6-lipoyllysine. Low complexity predominate over residues 152–172; sequence KAKPAEAPAAAAPKAEPTAAA. Positions 152 to 225 are disordered; it reads KAKPAEAPAA…GKGLRSEHRE (74 aa). Residue Lys154 is modified to N6-acetyllysine. Residues 173 to 196 show a composition bias toward pro residues; it reads VPPPAAPIPTQMPPVPSPSQPPSG. An N6-acetyllysine mark is found at Lys267, Lys272, Lys273, Lys277, and Lys307. Catalysis depends on residues His424 and Asp428.

Belongs to the 2-oxoacid dehydrogenase family. As to quaternary structure, the 2-oxoglutarate dehydrogenase complex is composed of OGDH (2-oxoglutarate dehydrogenase; E1), DLST (dihydrolipoamide succinyltransferase; E2), DLD (dihydrolipoamide dehydrogenase; E3) and the assembly factor KGD4. It contains multiple copies of the three enzymatic components (E1, E2 and E3). In the nucleus, the 2-oxoglutarate dehydrogenase complex associates with KAT2A. Interacts with ABHD11; this interaction maintains the functional lipoylation of the 2-oxoglutarate dehydrogenase complex. (R)-lipoate is required as a cofactor.

The protein resides in the mitochondrion matrix. It is found in the nucleus. The enzyme catalyses N(6)-[(R)-dihydrolipoyl]-L-lysyl-[protein] + succinyl-CoA = N(6)-[(R)-S(8)-succinyldihydrolipoyl]-L-lysyl-[protein] + CoA. It participates in amino-acid degradation; L-lysine degradation via saccharopine pathway; glutaryl-CoA from L-lysine: step 6/6. The protein operates within carbohydrate metabolism; tricarboxylic acid cycle. Functionally, dihydrolipoamide succinyltransferase (E2) component of the 2-oxoglutarate dehydrogenase complex. The 2-oxoglutarate dehydrogenase complex catalyzes the overall conversion of 2-oxoglutarate to succinyl-CoA and CO(2). The 2-oxoglutarate dehydrogenase complex is mainly active in the mitochondrion. A fraction of the 2-oxoglutarate dehydrogenase complex also localizes in the nucleus and is required for lysine succinylation of histones: associates with KAT2A on chromatin and provides succinyl-CoA to histone succinyltransferase KAT2A. This chain is Dihydrolipoyllysine-residue succinyltransferase component of 2-oxoglutarate dehydrogenase complex, mitochondrial, found in Homo sapiens (Human).